A 343-amino-acid polypeptide reads, in one-letter code: tRNA N6-adenosine threonylcarbamoyltransferase (343 aa).

The Fe cation site is built by His-120 and His-124. Substrate contacts are provided by residues 142-146 (VVSGG), Asp-175, Gly-188, Asp-192, and Asn-281. Asp-310 contributes to the Fe cation binding site.

The protein belongs to the KAE1 / TsaD family. Fe(2+) serves as cofactor.

It is found in the cytoplasm. The enzyme catalyses L-threonylcarbamoyladenylate + adenosine(37) in tRNA = N(6)-L-threonylcarbamoyladenosine(37) in tRNA + AMP + H(+). Required for the formation of a threonylcarbamoyl group on adenosine at position 37 (t(6)A37) in tRNAs that read codons beginning with adenine. Is involved in the transfer of the threonylcarbamoyl moiety of threonylcarbamoyl-AMP (TC-AMP) to the N6 group of A37, together with TsaE and TsaB. TsaD likely plays a direct catalytic role in this reaction. The protein is tRNA N6-adenosine threonylcarbamoyltransferase of Bacillus cereus (strain ATCC 14579 / DSM 31 / CCUG 7414 / JCM 2152 / NBRC 15305 / NCIMB 9373 / NCTC 2599 / NRRL B-3711).